A 689-amino-acid chain; its full sequence is Protein asunder (689 aa).

A coiled-coil region spans residues 521 to 550; sequence NGARLKLSKAKDQYRLLYRELEQLIQLNAT. Disordered stretches follow at residues 591–619 and 669–689; these read SPER…SKRR and KDAV…SVRS. Low complexity predominate over residues 599–614; sequence SSVGASGSSNSNSLLK. The short motif at 613 to 619 is the Nuclear localization signal (NLS) element; it reads LKASKRR.

This sequence belongs to the Integrator subunit 13 family. Belongs to the multiprotein complex Integrator, at least composed of IntS1, IntS2, IntS3, IntS4, omd/IntS5, IntS6, defl/IntS7, IntS8, IntS9, IntS10, IntS11, IntS12, asun/IntS13, IntS14 and IntS15. The core complex associates with protein phosphatase 2A subunits mts/PP2A and Pp2A-29B, to form the Integrator-PP2A (INTAC) complex. In terms of processing, phosphorylated.

The protein localises to the nucleus. Its subcellular location is the cytoplasm. The protein resides in the perinuclear region. Its function is as follows. Component of the integrator complex, a multiprotein complex that terminates RNA polymerase II (Pol II) transcription in the promoter-proximal region of genes. The integrator complex provides a quality checkpoint during transcription elongation by driving premature transcription termination of transcripts that are unfavorably configured for transcriptional elongation: the complex terminates transcription by (1) catalyzing dephosphorylation of the C-terminal domain (CTD) of Pol II subunit Polr2A/Rbp1 and Spt5, and (2) degrading the exiting nascent RNA transcript via endonuclease activity. The integrator complex is also involved in the 3'-end processing of the U7 snRNA, and also the spliceosomal snRNAs U1, U2, U4 and U5. The sequence is that of Protein asunder (asun) from Drosophila simulans (Fruit fly).